The following is a 585-amino-acid chain: MARPDPSAPPSLLLLLLAQLVGRAAAASKAPVCQEITVPMCRGIGYNLTHMPNQFNHDTQDEAGLEVHQFWPLVEIQCSPDLRFFLCSMYTPICLPDYHKPLPPCRSVCERAKAGCSPLMRQYGFAWPERMSCDRLPVLGRDAEVLCMDYNRSEATTAPPRPFPAKPTLPGPPGAPASGGECPAGGPFVCKCREPFVPILKESHPLYNKVRTGQVPNCAVPCYQPSFSADERTFATFWIGLWSVLCFISTSTTVATFLIDMERFRYPERPIIFLSACYLCVSLGFLVRLVVGHASVACSREHNHIHYETTGPALCTIVFLLVYFFGMASSIWWVILSLTWFLAAGMKWGNEAIAGYAQYFHLAAWLIPSVKSITALALSSVDGDPVAGICYVGNQNLNSLRGFVLGPLVLYLLVGTLFLLAGFVSLFRIRSVIKQGGTKTDKLEKLMIRIGIFTLLYTVPASIVVACYLYEQHYRESWEAALTCACPGHDTGQPRAKPEYWVLMLKYFMCLVVGITSGVWIWSGKTVESWRRFTSRCCCRPRRGHKSGGAMAAGDYPEASAALTGRTGPPGPAATYHKQVSLSHV.

Positions 1 to 26 are cleaved as a signal peptide; that stretch reads MARPDPSAPPSLLLLLLAQLVGRAAA. At 27-238 the chain is on the extracellular side; sequence ASKAPVCQEI…ADERTFATFW (212 aa). An FZ domain is found at 28–150; sequence SKAPVCQEIT…RDAEVLCMDY (123 aa). Intrachain disulfides connect cysteine 33/cysteine 94, cysteine 41/cysteine 87, cysteine 78/cysteine 116, cysteine 105/cysteine 147, and cysteine 109/cysteine 133. N-linked (GlcNAc...) asparagine glycosylation is present at asparagine 47. Asparagine 151 is a glycosylation site (N-linked (GlcNAc...) asparagine). Positions 156 to 179 are disordered; sequence TTAPPRPFPAKPTLPGPPGAPASG. Over residues 159-175 the composition is skewed to pro residues; sequence PPRPFPAKPTLPGPPGA. A helical transmembrane segment spans residues 239-259; the sequence is IGLWSVLCFISTSTTVATFLI. Over 260–270 the chain is Cytoplasmic; the sequence is DMERFRYPERP. The helical transmembrane segment at 271–291 threads the bilayer; sequence IIFLSACYLCVSLGFLVRLVV. At 292–315 the chain is on the extracellular side; that stretch reads GHASVACSREHNHIHYETTGPALC. A helical transmembrane segment spans residues 316–336; sequence TIVFLLVYFFGMASSIWWVIL. Residues 337–358 lie on the Cytoplasmic side of the membrane; it reads SLTWFLAAGMKWGNEAIAGYAQ. A helical membrane pass occupies residues 359-379; that stretch reads YFHLAAWLIPSVKSITALALS. Residues 380-402 lie on the Extracellular side of the membrane; sequence SVDGDPVAGICYVGNQNLNSLRG. Residues 403-423 form a helical membrane-spanning segment; it reads FVLGPLVLYLLVGTLFLLAGF. Topologically, residues 424–449 are cytoplasmic; the sequence is VSLFRIRSVIKQGGTKTDKLEKLMIR. Residues 450–470 traverse the membrane as a helical segment; that stretch reads IGIFTLLYTVPASIVVACYLY. Over 471 to 500 the chain is Extracellular; sequence EQHYRESWEAALTCACPGHDTGQPRAKPEY. Residues 501–521 form a helical membrane-spanning segment; it reads WVLMLKYFMCLVVGITSGVWI. At 522 to 585 the chain is on the cytoplasmic side; that stretch reads WSGKTVESWR…YHKQVSLSHV (64 aa). Positions 525 to 530 match the Lys-Thr-X-X-X-Trp motif, mediates interaction with the PDZ domain of Dvl family members motif; the sequence is KTVESW. The short motif at 583–585 is the PDZ-binding element; it reads SHV.

This sequence belongs to the G-protein coupled receptor Fz/Smo family. Binding of unsaturated fatty acid molecules (via FZ domain) promotes homodimerization. Interacts with WNT2B. Interacts with WNT3A. Interacts with WNT7A. Interacts with GOPC. Post-translationally, ubiquitinated by RNF43 and ZNRF3, leading to its degradation by the proteasome.

The protein resides in the cell membrane. It localises to the golgi apparatus membrane. The protein localises to the synapse. It is found in the perikaryon. Its subcellular location is the cell projection. The protein resides in the dendrite. It localises to the axon. Functionally, receptor for Wnt proteins. Functions in the canonical Wnt/beta-catenin signaling pathway. In vitro activates WNT2, WNT10B, WNT5A, but not WNT2B or WNT4 signaling. In neurons, activation by WNT7A promotes formation of synapses. May be involved in transduction and intercellular transmission of polarity information during tissue morphogenesis and/or in differentiated tissues. Plays a role in yolk sac angiogenesis and in placental vascularization. Plays a role in ocular development. The polypeptide is Frizzled-5 (FZD5) (Homo sapiens (Human)).